We begin with the raw amino-acid sequence, 505 residues long: Lysine--tRNA ligase (505 aa).

Mg(2+) contacts are provided by Glu-415 and Glu-422.

Belongs to the class-II aminoacyl-tRNA synthetase family. In terms of assembly, homodimer. Mg(2+) serves as cofactor.

It localises to the cytoplasm. It catalyses the reaction tRNA(Lys) + L-lysine + ATP = L-lysyl-tRNA(Lys) + AMP + diphosphate. The chain is Lysine--tRNA ligase from Shigella boydii serotype 4 (strain Sb227).